A 212-amino-acid chain; its full sequence is Deoxyribose-phosphate aldolase (212 aa).

Asp-89 functions as the Proton donor/acceptor in the catalytic mechanism. Lys-151 serves as the catalytic Schiff-base intermediate with acetaldehyde. Catalysis depends on Lys-180, which acts as the Proton donor/acceptor.

This sequence belongs to the DeoC/FbaB aldolase family. DeoC type 1 subfamily.

It is found in the cytoplasm. It carries out the reaction 2-deoxy-D-ribose 5-phosphate = D-glyceraldehyde 3-phosphate + acetaldehyde. It participates in carbohydrate degradation; 2-deoxy-D-ribose 1-phosphate degradation; D-glyceraldehyde 3-phosphate and acetaldehyde from 2-deoxy-alpha-D-ribose 1-phosphate: step 2/2. Functionally, catalyzes a reversible aldol reaction between acetaldehyde and D-glyceraldehyde 3-phosphate to generate 2-deoxy-D-ribose 5-phosphate. The chain is Deoxyribose-phosphate aldolase from Clostridium botulinum (strain 657 / Type Ba4).